The following is a 244-amino-acid chain: tRNA (guanine-N(7)-)-methyltransferase (244 aa).

Residues 1-24 (MTDSHVPHPESPAVEEGEERPHRR) are disordered. The S-adenosyl-L-methionine site is built by Glu74, Glu99, Asp126, and Asp149. Asp149 is a catalytic residue. Substrate is bound by residues Lys153, Asp185, and 222–225 (TKFE).

The protein belongs to the class I-like SAM-binding methyltransferase superfamily. TrmB family.

It catalyses the reaction guanosine(46) in tRNA + S-adenosyl-L-methionine = N(7)-methylguanosine(46) in tRNA + S-adenosyl-L-homocysteine. It participates in tRNA modification; N(7)-methylguanine-tRNA biosynthesis. Catalyzes the formation of N(7)-methylguanine at position 46 (m7G46) in tRNA. The chain is tRNA (guanine-N(7)-)-methyltransferase from Pseudomonas savastanoi pv. phaseolicola (strain 1448A / Race 6) (Pseudomonas syringae pv. phaseolicola (strain 1448A / Race 6)).